The chain runs to 614 residues: MLALKLQKKYPELTNEEILTLTDQFNKLDVDGKGYLDQPTTIKAFEDSKKGSYDEVREAIREVNVDSSGRVEPEDFVGIFNVLKKGVEGTEVKKGRITIKGSSSSVSHTINEEERREFIKHINSVLAGDPDVGSRVPINTETFEFFDQCKDGLILSKLINDSVPDTIDERVLNKQRNNKPLDNFKCIENNNVVINSAKAMGGISITNIGAGDILEGREHLILGLVWQIIRRGLLGKIDITLHPELYRLLEEDETLDQFLRLPPEKILLRWFNYHLKAANWPRTVSNFSKDVSDGENYTVLLNQLAPELCSRAPLQTTDVLQRAEQVLQNAEKLDCRKYLTPTAMVAGNPKLNLAFVAHLFNTHPGLEPLNEEEKPEIEPFDAEGEREARVFTLWLNSLDVTPSIHDFFNNLRDGLILLQAYDKITPNTVNWKKVNKAPASGDEMMRFKAVENCNYAVDLGKNQGFSLVGIQGADITDGSRTLTLALVWQMMRMNITKTLHSLSRGGKTLSDSDMVAWANSMAAKGGKGSQIRSFRDPSISTGVFVLDVLHGIKSEYVDYNLVTDGSTEELAIQNARLAISIARKLGAVIFILPEDIVAVRPRLVLHFIGSLMAV.

EF-hand domains follow at residues 16–50 (EEILTLTDQFNKLDVDGKGYLDQPTTIKAFEDSKK) and 51–86 (GSYDEVREAIREVNVDSSGRVEPEDFVGIFNVLKKG). 8 residues coordinate Ca(2+): Asp29, Asp31, Tyr35, Thr40, Asp66, Ser68, Arg70, and Asp75. Actin-binding regions lie at residues 98–368 (TIKG…GLEP) and 369–614 (LNEE…LMAV). 4 consecutive Calponin-homology (CH) domains span residues 112-233 (EEER…RRGL), 261-364 (LPPE…NTHP), 385-495 (EREA…RMNI), and 508-614 (TLSD…LMAV).

The protein resides in the cytoplasm. It localises to the cytoskeleton. It is found in the actin patch. In terms of biological role, binds to actin, and functionally associates with actin structures involved in the development and maintenance of cell polarity. Plays a role in cytokinesis. Plays important roles in mating and in spore formation. The protein is Fimbrin (fim1) of Schizosaccharomyces pombe (strain 972 / ATCC 24843) (Fission yeast).